Consider the following 532-residue polypeptide: CTP synthase (532 aa).

Residues 1–265 (MKYIVVTGGV…DEYLMRKLNL (265 aa)) are amidoligase domain. Residue Ser12 coordinates CTP. Ser12 provides a ligand contact to UTP. ATP is bound by residues 13 to 18 (GLGKGI) and Asp70. Mg(2+)-binding residues include Asp70 and Glu140. CTP contacts are provided by residues 147 to 149 (DIE), 186 to 191 (KTKPTQ), and Lys222. Residues 186 to 191 (KTKPTQ) and Lys222 contribute to the UTP site. In terms of domain architecture, Glutamine amidotransferase type-1 spans 289 to 529 (SIAIVGKYVD…VRAALKYRRE (241 aa)). Gly349 is an L-glutamine binding site. Cys376 serves as the catalytic Nucleophile; for glutamine hydrolysis. L-glutamine contacts are provided by residues 377–380 (FGFQ), Glu400, and Arg457. Residues His502 and Glu504 contribute to the active site.

This sequence belongs to the CTP synthase family. As to quaternary structure, homotetramer.

The catalysed reaction is UTP + L-glutamine + ATP + H2O = CTP + L-glutamate + ADP + phosphate + 2 H(+). The enzyme catalyses L-glutamine + H2O = L-glutamate + NH4(+). It carries out the reaction UTP + NH4(+) + ATP = CTP + ADP + phosphate + 2 H(+). The protein operates within pyrimidine metabolism; CTP biosynthesis via de novo pathway; CTP from UDP: step 2/2. Allosterically activated by GTP, when glutamine is the substrate; GTP has no effect on the reaction when ammonia is the substrate. The allosteric effector GTP functions by stabilizing the protein conformation that binds the tetrahedral intermediate(s) formed during glutamine hydrolysis. Inhibited by the product CTP, via allosteric rather than competitive inhibition. In terms of biological role, catalyzes the ATP-dependent amination of UTP to CTP with either L-glutamine or ammonia as the source of nitrogen. Regulates intracellular CTP levels through interactions with the four ribonucleotide triphosphates. The protein is CTP synthase of Archaeoglobus fulgidus (strain ATCC 49558 / DSM 4304 / JCM 9628 / NBRC 100126 / VC-16).